The sequence spans 155 residues: Microsomal glutathione S-transferase 1 (155 aa).

The Lumenal portion of the chain corresponds to 3–9 (DLTQVMD). Residues 10-33 (DEVFMAFASYATIILSKMMLMSTA) traverse the membrane as a helical segment. The Cytoplasmic portion of the chain corresponds to 34 to 62 (TAFYRLTRKVFANPEDCVAFGKGENAKKY). Arg-38 contacts glutathione. N6-acetyllysine occurs at positions 42, 55, and 60. A helical transmembrane segment spans residues 63-96 (LRTDDRVERVRRAHLNDLENIIPFLGIGLLYSLS). Residues Arg-73, Arg-74, His-76, and Glu-81 each contribute to the glutathione site. Over 97–99 (GPD) the chain is Lumenal. The helical transmembrane segment at 100–123 (PSTAILHFRLFVGARIYHTIAYLT) threads the bilayer. Residue Tyr-121 participates in glutathione binding. The Cytoplasmic portion of the chain corresponds to 124 to 128 (PLPQP). A helical membrane pass occupies residues 129 to 148 (NRALSFFVGYGVTLSMAYRL). The Lumenal portion of the chain corresponds to 149–155 (LKSKLYL).

It belongs to the MAPEG family. In terms of assembly, homotrimer; The trimer binds only one molecule of glutathione. In terms of tissue distribution, highly expressed in liver.

Its subcellular location is the endoplasmic reticulum membrane. The protein localises to the mitochondrion outer membrane. The enzyme catalyses RX + glutathione = an S-substituted glutathione + a halide anion + H(+). Conjugation of reduced glutathione to a wide number of exogenous and endogenous hydrophobic electrophiles. This chain is Microsomal glutathione S-transferase 1 (MGST1), found in Homo sapiens (Human).